The chain runs to 274 residues: Small ribosomal subunit protein uS3 (274 aa).

The region spanning 38-106 (IRRLLSSGLE…QVQLNILEVK (69 aa)) is the KH type-2 domain. The disordered stretch occupies residues 215–274 (AAAAPAGADRPRRERPSGTRPRRSGASGTTATGTDAGRAAGGEEAAPDAAAPVEAQSTES). Low complexity predominate over residues 238–266 (SGASGTTATGTDAGRAAGGEEAAPDAAAP).

Belongs to the universal ribosomal protein uS3 family. As to quaternary structure, part of the 30S ribosomal subunit. Forms a tight complex with proteins S10 and S14.

Functionally, binds the lower part of the 30S subunit head. Binds mRNA in the 70S ribosome, positioning it for translation. This is Small ribosomal subunit protein uS3 from Mycobacterium tuberculosis (strain ATCC 25177 / H37Ra).